A 494-amino-acid chain; its full sequence is Ubiquinol-cytochrome-c reductase complex core protein I, mitochondrial (494 aa).

H70 is a Zn(2+) binding site. E73 (proton acceptor) is an active-site residue. 2 residues coordinate Zn(2+): H74 and E150.

The protein belongs to the peptidase M16 family. UQCRC1/QCR1 subfamily. As to quaternary structure, component of the ubiquinol-cytochrome c oxidoreductase (cytochrome b-c1 complex, complex III, CIII), a multisubunit enzyme composed of 10 subunits. The complex is composed of 3 respiratory subunits cytochrome b, cytochrome c1 and Rieske protein, 2 core protein subunits, and additional low-molecular weight protein subunits. The complex exists as an obligatory dimer and forms supercomplexes (SCs) in the inner mitochondrial membrane with cytochrome c oxidase (complex IV, CIV). Zn(2+) is required as a cofactor. In terms of processing, the N-terminus is blocked.

Its subcellular location is the mitochondrion inner membrane. Its function is as follows. Component of the ubiquinol-cytochrome c oxidoreductase, a multisubunit transmembrane complex that is part of the mitochondrial electron transport chain which drives oxidative phosphorylation. The respiratory chain contains 3 multisubunit complexes succinate dehydrogenase (complex II, CII), ubiquinol-cytochrome c oxidoreductase (cytochrome b-c1 complex, complex III, CIII) and cytochrome c oxidase (complex IV, CIV), that cooperate to transfer electrons derived from NADH and succinate to molecular oxygen, creating an electrochemical gradient over the inner membrane that drives transmembrane transport and the ATP synthase. The cytochrome b-c1 complex catalyzes electron transfer from ubiquinol to cytochrome c, linking this redox reaction to translocation of protons across the mitochondrial inner membrane, with protons being carried across the membrane as hydrogens on the quinol. In the process called Q cycle, 2 protons are consumed from the matrix, 4 protons are released into the intermembrane space and 2 electrons are passed to cytochrome c. The sequence is that of Ubiquinol-cytochrome-c reductase complex core protein I, mitochondrial from Euglena gracilis.